A 183-amino-acid chain; its full sequence is Large ribosomal subunit protein uL13m (183 aa).

It belongs to the universal ribosomal protein uL13 family. Component of the mitochondrial large ribosomal subunit (mt-LSU). Mature N.crassa 74S mitochondrial ribosomes consist of a small (37S) and a large (54S) subunit. The 37S small subunit contains a 16S ribosomal RNA (16S mt-rRNA) and 32 different proteins. The 54S large subunit contains a 23S rRNA (23S mt-rRNA) and 42 different proteins.

The protein localises to the mitochondrion. In terms of biological role, component of the mitochondrial ribosome (mitoribosome), a dedicated translation machinery responsible for the synthesis of mitochondrial genome-encoded proteins, including at least some of the essential transmembrane subunits of the mitochondrial respiratory chain. The mitoribosomes are attached to the mitochondrial inner membrane and translation products are cotranslationally integrated into the membrane. This Neurospora crassa (strain ATCC 24698 / 74-OR23-1A / CBS 708.71 / DSM 1257 / FGSC 987) protein is Large ribosomal subunit protein uL13m (mrpl23).